A 730-amino-acid chain; its full sequence is MGRRKKMVERVTTLMNDPQRIRNIGIVAHIDHGKTTLSDNLLAGAGMISKELAGRQLFMDSDEEEQARGITIDASNVSMVHTFDNEDYLINLIDTPGHVDFGGDVTRAMRAVDGAVVVVDAVEGTMPQTETVLRQALREHVRPVLFVNKVDRLINELQVDSQEMQVRLGKVIDHVNKLIKNMNPEKFKAGWKVDAAAGTVAFGSALYNWAISVPMMKKTGVSFNDVYEYCKAGDMKTLAEKCPLHEAVLDMVIHFLPNPLVAQQGRVKVIWHGDENSEVGKSMTHAHADGDLAFMVTDISVDPHAGEVATGRLFSGSLTRGMEVYTSGTAKKSRVQQVGIFMGPERLEVDKIPAGNIAAVTGLKDAIVGSTVTTLDGMTPFESIRHVSEPVVTVAVEAKHTKDLPKLIEVLRQVAKEDPTLQITLDEETGEHLMAGMGELHLEVIAHRIERDKNVEITTSKPIVVYRETIKKKTEPIEGKSPNRHNRFYISVEPLDLEIVSAIKEGEITMNMPELERRQKLIELGMDKEQAKGIAGIFNSNIFIDQTKGIQYLNETMELVLDGFEEVMRAGPLTREPVANVKCVLVDAKLHEDAIHRGPAQIIPASRQAIQAGMLMAEDSLLEPYQKVFVQVPQLLMGGATKELQGRRGVILNMTTEGDLAIIEARVPVAEMFGFAGEIRSATEGRAMWSTEFGGFDVVPSSILTEIVGQIRERKGLKKDLPKASDYLSM.

One can recognise a tr-type G domain in the interval 19-260 (QRIRNIGIVA…MVIHFLPNPL (242 aa)). Residues 28-35 (AHIDHGKT), 94-98 (DTPGH), and 148-151 (NKVD) contribute to the GTP site. A Diphthamide modification is found at His596.

It belongs to the TRAFAC class translation factor GTPase superfamily. Classic translation factor GTPase family. EF-G/EF-2 subfamily.

The protein resides in the cytoplasm. Its function is as follows. Catalyzes the GTP-dependent ribosomal translocation step during translation elongation. During this step, the ribosome changes from the pre-translocational (PRE) to the post-translocational (POST) state as the newly formed A-site-bound peptidyl-tRNA and P-site-bound deacylated tRNA move to the P and E sites, respectively. Catalyzes the coordinated movement of the two tRNA molecules, the mRNA and conformational changes in the ribosome. In Methanosarcina mazei (strain ATCC BAA-159 / DSM 3647 / Goe1 / Go1 / JCM 11833 / OCM 88) (Methanosarcina frisia), this protein is Elongation factor 2.